Consider the following 261-residue polypeptide: Glandular kallikrein-7, submandibular/renal (261 aa).

A signal peptide spans 1-18; the sequence is MWFLILFLDLSLGQIDAA. The propeptide at 19 to 24 is activation peptide; the sequence is PPGQSR. In terms of domain architecture, Peptidase S1 spans 25–258; that stretch reads VIGGYKCEKN…FTSWIKEVMK (234 aa). 5 cysteine pairs are disulfide-bonded: Cys-31–Cys-173, Cys-50–Cys-66, Cys-152–Cys-219, Cys-184–Cys-198, and Cys-209–Cys-234. His-65 (charge relay system) is an active-site residue. An N-linked (GlcNAc...) asparagine glycan is attached at Asn-108. The active-site Charge relay system is the Asp-120. Residue Ser-213 is the Charge relay system of the active site.

Belongs to the peptidase S1 family. Kallikrein subfamily. Kidney and submandibular gland. Not expressed in liver, pancreas, spleen, parotid, testis, cortex, prostate, ovary and pituitary.

The enzyme catalyses Preferential cleavage of Arg-|-Xaa bonds in small molecule substrates. Highly selective action to release kallidin (lysyl-bradykinin) from kininogen involves hydrolysis of Met-|-Xaa or Leu-|-Xaa.. In terms of biological role, glandular kallikreins cleave Met-Lys and Arg-Ser bonds in kininogen to release Lys-bradykinin. Predominant kallikrein protein in the kidney. The sequence is that of Glandular kallikrein-7, submandibular/renal (Klk7) from Rattus norvegicus (Rat).